We begin with the raw amino-acid sequence, 120 residues long: Large ribosomal subunit protein bL12 (120 aa).

Belongs to the bacterial ribosomal protein bL12 family. Homodimer. Part of the ribosomal stalk of the 50S ribosomal subunit. Forms a multimeric L10(L12)X complex, where L10 forms an elongated spine to which 2 to 4 L12 dimers bind in a sequential fashion. Binds GTP-bound translation factors.

Functionally, forms part of the ribosomal stalk which helps the ribosome interact with GTP-bound translation factors. Is thus essential for accurate translation. This chain is Large ribosomal subunit protein bL12, found in Pseudoalteromonas translucida (strain TAC 125).